A 250-amino-acid polypeptide reads, in one-letter code: Gamma-secretase subunit APH1-like (250 aa).

The next 7 membrane-spanning stretches (helical) occupy residues 5 to 25 (AGIG…VSVI), 29 to 49 (PFLI…LIIL), 57 to 77 (LPLK…SVCF), 116 to 136 (IALA…CLSL), 157 to 177 (FLIS…SMVI), 191 to 211 (IIVP…FASE), and 212 to 232 (GCVI…VHCG).

It belongs to the APH-1 family. As to quaternary structure, probable component of the gamma-secretase complex, a complex composed of a presenilin homodimer, nicastrin, APH1 and PEN2.

It localises to the membrane. Functionally, probable subunit of the gamma-secretase complex, an endoprotease complex that catalyzes the intramembrane cleavage of integral proteins such as Notch receptors. This Arabidopsis thaliana (Mouse-ear cress) protein is Gamma-secretase subunit APH1-like.